The primary structure comprises 173 residues: Bifunctional protein PyrR (173 aa).

Substrate is bound by residues 40 to 41, 97 to 105, and Arg130; these read TR and DDVLYTGRT. The short motif at 93–105 is the PRPP-binding element; that stretch reads VILIDDVLYTGRT.

The protein belongs to the purine/pyrimidine phosphoribosyltransferase family. PyrR subfamily. Homodimer and homohexamer; in equilibrium.

It carries out the reaction UMP + diphosphate = 5-phospho-alpha-D-ribose 1-diphosphate + uracil. Regulates transcriptional attenuation of the pyrimidine nucleotide (pyr) operon by binding in a uridine-dependent manner to specific sites on pyr mRNA. This disrupts an antiterminator hairpin in the RNA and favors formation of a downstream transcription terminator, leading to a reduced expression of downstream genes. Its function is as follows. Also displays a weak uracil phosphoribosyltransferase activity which is not physiologically significant. This Streptococcus pyogenes serotype M6 (strain ATCC BAA-946 / MGAS10394) protein is Bifunctional protein PyrR.